Reading from the N-terminus, the 106-residue chain is Large ribosomal subunit protein bL21 (106 aa).

The protein belongs to the bacterial ribosomal protein bL21 family. Part of the 50S ribosomal subunit. Contacts protein L20.

This protein binds to 23S rRNA in the presence of protein L20. This Chlamydia abortus (strain DSM 27085 / S26/3) (Chlamydophila abortus) protein is Large ribosomal subunit protein bL21.